The chain runs to 684 residues: Glycine--tRNA ligase beta subunit (684 aa).

This sequence belongs to the class-II aminoacyl-tRNA synthetase family. In terms of assembly, tetramer of two alpha and two beta subunits.

The protein localises to the cytoplasm. The catalysed reaction is tRNA(Gly) + glycine + ATP = glycyl-tRNA(Gly) + AMP + diphosphate. The protein is Glycine--tRNA ligase beta subunit of Pseudomonas aeruginosa (strain LESB58).